The following is a 468-amino-acid chain: Transmembrane protein 151B (468 aa).

Positions 1–25 are disordered; that stretch reads MPEDGGGDSGDVPEIIPDGEPLREE. 2 consecutive transmembrane segments (helical) span residues 45-65 and 98-118; these read CLLL…CRLA and YLYI…AECW. Positions 384–438 are disordered; sequence VSSNSLPPARPSGPRLPFSRSRLSLGAGGRATPGVFRSLSGGPLGRRGEDTEPLE.

The protein belongs to the TMEM151 family.

It is found in the membrane. This is Transmembrane protein 151B (TMEM151B) from Bos taurus (Bovine).